The primary structure comprises 124 residues: Large ribosomal subunit protein bL12 (124 aa).

Belongs to the bacterial ribosomal protein bL12 family. As to quaternary structure, homodimer. Part of the ribosomal stalk of the 50S ribosomal subunit. Forms a multimeric L10(L12)X complex, where L10 forms an elongated spine to which 2 to 4 L12 dimers bind in a sequential fashion. Binds GTP-bound translation factors.

Functionally, forms part of the ribosomal stalk which helps the ribosome interact with GTP-bound translation factors. Is thus essential for accurate translation. This Campylobacter fetus subsp. fetus (strain 82-40) protein is Large ribosomal subunit protein bL12.